A 605-amino-acid polypeptide reads, in one-letter code: Threonine--tRNA ligase (605 aa).

A catalytic region spans residues Asp-195–Pro-497. Residues Cys-294, His-345, and His-474 each coordinate Zn(2+).

It belongs to the class-II aminoacyl-tRNA synthetase family. In terms of assembly, homodimer. Zn(2+) is required as a cofactor.

Its subcellular location is the cytoplasm. It catalyses the reaction tRNA(Thr) + L-threonine + ATP = L-threonyl-tRNA(Thr) + AMP + diphosphate + H(+). Functionally, catalyzes the attachment of threonine to tRNA(Thr) in a two-step reaction: L-threonine is first activated by ATP to form Thr-AMP and then transferred to the acceptor end of tRNA(Thr). Also edits incorrectly charged L-seryl-tRNA(Thr). In Thermosynechococcus vestitus (strain NIES-2133 / IAM M-273 / BP-1), this protein is Threonine--tRNA ligase.